The sequence spans 308 residues: Urease subunit beta (308 aa).

In terms of domain architecture, Urease spans 131 to 308; the sequence is GGIDTHIHFI…STNPTIPFTK (178 aa). Ni(2+)-binding residues include histidine 136, histidine 138, lysine 219, histidine 248, and histidine 274. Lysine 219 bears the N6-carboxylysine mark.

Belongs to the metallo-dependent hydrolases superfamily. Urease alpha subunit family. As to quaternary structure, heterohexamer of 3 UreA (alpha) and 3 UreB (beta) subunits. Ni cation serves as cofactor. Carboxylation allows a single lysine to coordinate two nickel ions.

It is found in the cytoplasm. It catalyses the reaction urea + 2 H2O + H(+) = hydrogencarbonate + 2 NH4(+). Its pathway is nitrogen metabolism; urea degradation; CO(2) and NH(3) from urea (urease route): step 1/1. The chain is Urease subunit beta (ureB) from Helicobacter mustelae.